Reading from the N-terminus, the 573-residue chain is PCNA-interacting partner (573 aa).

Disordered stretches follow at residues 470-505 (VGKA…SKGK) and 531-560 (PKVP…RGKL).

Belongs to the PARI family. Interacts with RAD51 and PCNA. Interacts with PARP1. Interacts with TASOR. In terms of tissue distribution, expressed in the ovary, Sertoli cells of the testis and in granular cells within the cerebellum.

It localises to the cytoplasm. The protein localises to the nucleus. Functionally, required to suppress inappropriate homologous recombination, thereby playing a central role DNA repair and in the maintenance of genomic stability. Antagonizes homologous recombination by interfering with the formation of the RAD51-DNA homologous recombination structure. Binds single-strand DNA and poly(A) homopolymers. Positively regulate the poly(ADP-ribosyl)ation activity of PARP1; however such function may be indirect. This chain is PCNA-interacting partner (Parpbp), found in Mus musculus (Mouse).